The chain runs to 331 residues: N-arachidonyl glycine receptor (331 aa).

Residues 1–26 are Extracellular-facing; the sequence is MITLNNQDQPVPFNNSYPDEYEIAAL. N14 carries an N-linked (GlcNAc...) asparagine glycan. A helical transmembrane segment spans residues 27–47; the sequence is VFYSCIFIIGLFVNITALWVF. Over 48 to 56 the chain is Cytoplasmic; the sequence is SCTTKKRTT. The chain crosses the membrane as a helical span at residues 57–77; sequence VTIYMMNVALVDLIFIMTLPF. Residues 78-95 lie on the Extracellular side of the membrane; sequence RMFYYAKDEWPFGEYFCQ. C94 and C172 are joined by a disulfide. A helical membrane pass occupies residues 96 to 116; sequence ILGALTVFYPSIALWLLAFIS. Over 117-138 the chain is Cytoplasmic; sequence ADRYMAIVQPKYAKELKNTCKA. A helical transmembrane segment spans residues 139–159; it reads VLACVGVWIMTLTTTIPLLLL. Over 160 to 191 the chain is Extracellular; that stretch reads HKDPDKDSTPATCLKISDIVYLKAVNVLNFTR. N188 is a glycosylation site (N-linked (GlcNAc...) asparagine). Residues 192–212 traverse the membrane as a helical segment; sequence LTFFFLIPLFIMIGCYLVIIH. Residues 213–232 are Cytoplasmic-facing; that stretch reads NLLHGRTSKLKPKVKEKSIR. A helical transmembrane segment spans residues 233 to 253; sequence IIITLLVQVLVCFMPFHICFA. Topologically, residues 254-268 are extracellular; it reads FLMLGTGENSYSPWG. The chain crosses the membrane as a helical span at residues 269–289; sequence AFTTFLMNLSTCLDVILYYIV. The Cytoplasmic portion of the chain corresponds to 290 to 331; that stretch reads SKQFQARVISVMLYRNYLRGMRRKSFRSGSLRSLSNINSEML. Position 322 is a phosphoserine (S322).

The protein belongs to the G-protein coupled receptor 1 family.

The protein localises to the cell membrane. It is found in the cytoplasmic vesicle membrane. In terms of biological role, g protein-coupled receptor (GPCR) that plays a role in diverse physiological processes particularly within the immune and nervous systems. Becomes active when triggered by various endogenous ligands including endocannabinoid N-arachidonyl glycine (NAGly), delta-9-tetrahydrocannabinol or resolvin D2/RvD2 derived from the omega-3 fatty acid docosahexaenoic acid (DHA). Upon RvD2 binding, facilitates the resolution of inflammation, aiding in tissue repair and homeostasis. Mechanistically, RvD2 ligation initiates Galphas protein coupling, activation of cAMP-PKA signaling pathway and phosphorylation of STAT3, leading to RvD2-stimulated macrophage phagocytosis. Mediates NAGly-induced process of reorganization of actin filaments and induction of acrosomal exocytosis. Activation by N-arachidonoyl glycine (NAGly) can also induce apoptosis in macrophages. Plays a role in homeostasis of CD8+ subsets of intraepithelial lymphocytes (IELs) (CD8alphaalpha and CD8alphabeta IELs) in small intestine by supporting preferential migration of CD8alphaalpha T-cells to intraepithelial compartment over lamina propria compartment, and by mediating their reconstitution into small intestine after bone marrow transplant. Participates also in hypotensive responses, mediating reduction in intraocular and blood pressure. This is N-arachidonyl glycine receptor from Macaca fascicularis (Crab-eating macaque).